We begin with the raw amino-acid sequence, 230 residues long: Large ribosomal subunit protein uL1 (230 aa).

The protein belongs to the universal ribosomal protein uL1 family. As to quaternary structure, part of the 50S ribosomal subunit.

Binds directly to 23S rRNA. The L1 stalk is quite mobile in the ribosome, and is involved in E site tRNA release. Functionally, protein L1 is also a translational repressor protein, it controls the translation of the L11 operon by binding to its mRNA. This chain is Large ribosomal subunit protein uL1, found in Nitrobacter winogradskyi (strain ATCC 25391 / DSM 10237 / CIP 104748 / NCIMB 11846 / Nb-255).